The chain runs to 222 residues: UPF0758 protein YPN_3801 (222 aa).

Residues 100–222 (VLLNPGITQK…CVSFAERGWL (123 aa)) form the MPN domain. H171, H173, and D184 together coordinate Zn(2+). The JAMM motif signature appears at 171–184 (HNHPSGKAEPSQAD).

It belongs to the UPF0758 family. YicR subfamily.

This chain is UPF0758 protein YPN_3801, found in Yersinia pestis bv. Antiqua (strain Nepal516).